The sequence spans 521 residues: GMP synthase [glutamine-hydrolyzing] (521 aa).

The region spanning 9-203 is the Glutamine amidotransferase type-1 domain; sequence KILILDFGSQ…ISGICQCEKN (195 aa). Cys86 serves as the catalytic Nucleophile. Residues His177 and Glu179 contribute to the active site. Positions 204-396 constitute a GMPS ATP-PPase domain; it reads WTTDNIIAKL…LSIPPHIIYR (193 aa). Position 231–237 (231–237) interacts with ATP; that stretch reads SGGVDSL.

As to quaternary structure, homodimer.

It catalyses the reaction XMP + L-glutamine + ATP + H2O = GMP + L-glutamate + AMP + diphosphate + 2 H(+). The protein operates within purine metabolism; GMP biosynthesis; GMP from XMP (L-Gln route): step 1/1. In terms of biological role, catalyzes the synthesis of GMP from XMP. The sequence is that of GMP synthase [glutamine-hydrolyzing] from Ruthia magnifica subsp. Calyptogena magnifica.